Consider the following 201-residue polypeptide: ADP-ribosylation factor-like protein 4D (201 aa).

Glycine 2 carries N-myristoyl glycine lipidation. GTP-binding positions include 28 to 35 (GLDSAGKT), 76 to 80 (DVGGQ), and 135 to 138 (NKQD).

It belongs to the small GTPase superfamily. Arf family. As to quaternary structure, interacts with CYTH2; the interaction is direct and ARL4D GTP-dependent. Does not interact with ARL4D.

It localises to the nucleus. It is found in the nucleolus. The protein resides in the cell membrane. The protein localises to the cytoplasm. In terms of biological role, small GTP-binding protein which cycles between an inactive GDP-bound and an active GTP-bound form, and the rate of cycling is regulated by guanine nucleotide exchange factors (GEF) and GTPase-activating proteins (GAP). GTP-binding protein that does not act as an allosteric activator of the cholera toxin catalytic subunit. Recruits CYTH1, CYTH2, CYTH3 and CYTH4 to the plasma membrane in GDP-bound form. The sequence is that of ADP-ribosylation factor-like protein 4D (ARL4D) from Homo sapiens (Human).